A 305-amino-acid chain; its full sequence is uncharacterized protein (305 aa).

This is an uncharacterized protein from Acanthamoeba polyphaga mimivirus (APMV).